Reading from the N-terminus, the 705-residue chain is Solute carrier family 12 member 8 (705 aa).

11 helical membrane-spanning segments follow: residues 38 to 58 (FGTWDGVFTSCMINIFGVVLF), 69 to 89 (GVLLGLLLVSFVVLVALITVL), 92 to 112 (IGVAEHGGISSGGVYSMISSV), 121 to 141 (VGLLYVFGQCVAGAMYITGFA), 159 to 179 (ISVAVLLALLGINLAGVKWII), 181 to 201 (LQLLLLLLLAVSTLDFVVGSF), 232 to 252 (FFTVFGVFFPAATGVMAGFNM), 268 to 288 (LAAVGVSWFLYIIFAFLLGAV), 306 to 326 (LVGFLFLLGLYISSLASCMGG), 368 to 388 (LVTMAFVLVGQVNVLAPVVTI), and 390 to 410 (FMLTYIMVDYSYFALSMAHCG). The tract at residues 472–512 (ESRQLGSREGNNPKNQKRKGKKGAKQTLQDSFLLDPGSPLS) is disordered. Residues 486-495 (NQKRKGKKGA) are compositionally biased toward basic residues. The next 2 membrane-spanning stretches (helical) occupy residues 587 to 607 (WVSLLGALASLLIMFVIQWLY) and 612 to 632 (MGVAALVYFYIGQASPGLYLG).

The protein belongs to the SLC12A transporter family.

It is found in the membrane. Cation/chloride cotransporter that may play a role in the control of keratinocyte proliferation. The polypeptide is Solute carrier family 12 member 8 (Slc12a8) (Mus musculus (Mouse)).